Here is a 935-residue protein sequence, read N- to C-terminus: MAPAGILNGKLVSAQIRDRLKNQVTRMQEQVPGFTPGLAILQVGDRDDSNLYINVKLKAAEEIGIKATHIKLPRTSTESEVLKYVISLNEDASVHGFIVQLPLDSENSINTEAVINAIAPEKDVDGLTSVSAGKLARGDLNDCFIPCTPKGCLELIKEAGVQIAGRHAVVVGRSKIVGAPMHDLLLWNNATVTTCHSKTANLDKEVNKGDILVVATGQPEMVKGEWIKPGAVVIDCGINYVPDDTKPNGRKVVGDVAYDEAKERASFITPVPGGVGPMTVAMLMQSTVESAQRFLQKFKPGKWTIQYNKLNLKTPVPSDIAISRSCKPKLIGNLAREIGLLTEEVELYGETKAKVLLSALDRLKHQPDGKYVVVTGITPTPLGEGKSTTTIGLVQALGAHLRQNVFACVRQPSQGPTFGIKGGAAGGGYSQVIPMEEFNLHLTGDIHAITAANNLVAAAIDARIFHELTQTDKALFNRLVPSVNGIRKFSDIQIRRLRRLGIEKTDPTTLTDDEINRFARLDIDPETITWQRVLDTNDRFLRKITIGQSPTEKGHTRTAQFDISVASEIMAVLALTSSLEDMRERLGRMVVASSKKGEPISCEDLGVSGALTVLMKDAIKPNLMQTLEGTPVFVHAGPFANIAHGNSSIIADRIALKLVGPEGFVVTEAGFGADIGMEKFFNIKCRYSGLQPHVVVLVATVRALKMHGGGPTVTAGLPLPKAYTEEDLDLVEKGFSNLRKQIENARMFGVPVVVAVNVFKTDTDAELDLVSRLSREHGAFDAVKCTHWAEGGQGALALAQAVQRASQAPSSFQLLYDLKLSIEDKIRIIAQRIYGADDIELLPEAQNKAEIYTKQGFGNLPICMAKTHLSLSHNPEQKGVPTGFVLPIRDIRASVGAGFLYPLVGTMSTMPGLPTRPCFYDIDLDPETEQVNGLF.

An N-acetylmethionine modification is found at M1. Residues 2 to 291 form a methylenetetrahydrofolate dehydrogenase and methenyltetrahydrofolate cyclohydrolase (D/C) domain region; sequence APAGILNGKL…MLMQSTVESA (290 aa). Substrate-binding positions include 52 to 56 and 99 to 101; these read YINVK and VQL. K56 is an active-site residue. NADP(+) is bound by residues 172–174 and S197; that span reads GRS. Substrate is bound at residue 272-276; the sequence is PGGVG. Residues 310–935 form a formyltetrahydrofolate synthetase domain region; sequence LNLKTPVPSD…PETEQVNGLF (626 aa). S318 bears the Phosphoserine mark. 380–387 lines the ATP pocket; the sequence is TPLGEGKS. 2 positions are modified to phosphoserine: S413 and S490.

It in the N-terminal section; belongs to the tetrahydrofolate dehydrogenase/cyclohydrolase family. This sequence in the C-terminal section; belongs to the formate--tetrahydrofolate ligase family. Homodimer.

The protein localises to the cytoplasm. The enzyme catalyses (6R)-5,10-methylene-5,6,7,8-tetrahydrofolate + NADP(+) = (6R)-5,10-methenyltetrahydrofolate + NADPH. It catalyses the reaction (6R)-5,10-methenyltetrahydrofolate + H2O = (6R)-10-formyltetrahydrofolate + H(+). The catalysed reaction is (6S)-5,6,7,8-tetrahydrofolate + formate + ATP = (6R)-10-formyltetrahydrofolate + ADP + phosphate. It participates in one-carbon metabolism; tetrahydrofolate interconversion. Trifunctional enzyme that catalyzes the interconversion of three forms of one-carbon-substituted tetrahydrofolate: (6R)-5,10-methylene-5,6,7,8-tetrahydrofolate, 5,10-methenyltetrahydrofolate and (6S)-10-formyltetrahydrofolate. These derivatives of tetrahydrofolate are differentially required in nucleotide and amino acid biosynthesis, (6S)-10-formyltetrahydrofolate being required for purine biosynthesis while (6R)-5,10-methylene-5,6,7,8-tetrahydrofolate is used for serine and methionine biosynthesis for instance. The polypeptide is C-1-tetrahydrofolate synthase, cytoplasmic (Mthfd1) (Mus musculus (Mouse)).